We begin with the raw amino-acid sequence, 587 residues long: Glutaconyl-CoA decarboxylase subunit alpha (587 aa).

Positions 31 to 298 (LKKIEEEIHQ…YDPEFFRVDD (268 aa)) constitute a CoA carboxyltransferase N-terminal domain. The tract at residues 31–558 (LKKIEEEIHQ…RGYVEAFTEA (528 aa)) is carboxyltransferase. Residues 295 to 558 (RVDDPKAPAF…RGYVEAFTEA (264 aa)) enclose the CoA carboxyltransferase C-terminal domain.

Heterooctamer consisting of two alpha, two beta, two gamma and two delta subunits.

It carries out the reaction (2E)-glutaconyl-CoA + Na(+)(in) + H(+) = (2E)-butenoyl-CoA + Na(+)(out) + CO2. Its pathway is amino-acid degradation; L-glutamate degradation via hydroxyglutarate pathway; crotonoyl-CoA from L-glutamate: step 5/5. In terms of biological role, decarboxylase subunit of the primary sodium pump glutaconyl-CoA decarboxylase (GCD). This chain is Glutaconyl-CoA decarboxylase subunit alpha (gcdA), found in Acidaminococcus fermentans (strain ATCC 25085 / DSM 20731 / CCUG 9996 / CIP 106432 / VR4).